A 634-amino-acid chain; its full sequence is Nucleoside triphosphatase I (634 aa).

In terms of domain architecture, Helicase ATP-binding spans 41–203 (FLGLDSMNSL…ALLVNLLRPG (163 aa)). 54–61 (QETGVGKT) serves as a coordination point for ATP. Residues 140–143 (DECH) carry the DEXH box motif. The region spanning 355 to 531 (SLYQALYEHS…EFSQLYRVLK (177 aa)) is the Helicase C-terminal domain. A binding to the cap-specific mRNA (nucleoside-2'-O-)-methyltransferase region spans residues 456 to 523 (DIFILDMTWN…EIIQNKAREF (68 aa)).

It belongs to the helicase family. NPH I subfamily. Monomer. Interacts (via C-terminus) with RAP94 (via N-terminus). Interacts with the cap-specific mRNA (nucleoside-2'-O-)-methyltransferase.

Its subcellular location is the virion. It catalyses the reaction a ribonucleoside 5'-triphosphate + H2O = a ribonucleoside 5'-diphosphate + phosphate + H(+). In terms of biological role, DNA-dependent ATPase required for providing the needed energy to achieve the termination of early transcripts. Acts in concert with the RAP94 subunit of the virion RNA polymerase and the capping enzyme/VTF to catalyze release of UUUUUNU-containing nascent RNA from the elongation complex. NPH-I must bind ssDNA in order to exhibit ATPase activity. This Homo sapiens (Human) protein is Nucleoside triphosphatase I (NPH1).